The following is a 153-amino-acid chain: Prostaglandin E synthase (153 aa).

The Lumenal segment spans residues 1–13; that stretch reads MPSPGLVMESGQV. A helical transmembrane segment spans residues 14–42; it reads LPAFLLCSTLLVIKMYAVAVITGQMRLRK. Residue Arg39 participates in glutathione binding. The Cytoplasmic portion of the chain corresponds to 43 to 61; that stretch reads KAFANPEDALKRGGLQYYR. A helical membrane pass occupies residues 62-91; sequence SDPDVERCLRAHRNDMETIYPFLFLGFVYS. 74-78 is a binding site for glutathione; it reads RNDME. Residues 92 to 96 are Lumenal-facing; sequence FLGPN. Residues 97-120 form a helical membrane-spanning segment; the sequence is PLIAWIHFLVVLTGRVVHTVAYLG. Positions 114 and 118 each coordinate glutathione. Topologically, residues 121–124 are cytoplasmic; that stretch reads KLNP. A helical membrane pass occupies residues 125 to 153; it reads RLRSGAYVLAQFSCFSMALQILWEVAHHL. 127–131 lines the glutathione pocket; that stretch reads RSGAY.

Belongs to the MAPEG family. Homotrimer. Glutathione is required as a cofactor.

The protein localises to the membrane. Its subcellular location is the cytoplasm. The protein resides in the perinuclear region. The enzyme catalyses prostaglandin H2 = prostaglandin E2. It carries out the reaction 2-glyceryl-prostaglandin H2 = 2-glyceryl-prostaglandin E2. It catalyses the reaction prostaglandin G2 = (15S)-15-hydroperoxy-prostaglandin E2. The catalysed reaction is 1-chloro-2,4-dinitrobenzene + glutathione = 2,4-dinitrophenyl-S-glutathione + chloride + H(+). The enzyme catalyses (5S)-hydroperoxy-(6E,8Z,11Z,14Z)-eicosatetraenoate + 2 glutathione = (5S)-hydroxy-(6E,8Z,11Z,14Z)-eicosatetraenoate + glutathione disulfide + H2O. It participates in lipid metabolism; prostaglandin biosynthesis. Activity is increased markedly in macrophages and osteoblasts following pro-inflammatory stimuli. Terminal enzyme of the cyclooxygenase (COX)-2-mediated prostaglandin E2 (PGE2) biosynthetic pathway. Catalyzes the glutathione-dependent oxidoreduction of prostaglandin endoperoxide H2 (PGH2) to prostaglandin E2 (PGE2) in response to inflammatory stimuli. Plays a key role in inflammation response, fever and pain. Also catalyzes the oxidoreduction of endocannabinoids into prostaglandin glycerol esters and PGG2 into 15-hydroperoxy-PGE2. In addition, displays low glutathione transferase and glutathione-dependent peroxidase activities, toward 1-chloro-2,4-dinitrobenzene and 5-hydroperoxyicosatetraenoic acid (5-HPETE), respectively. The polypeptide is Prostaglandin E synthase (Ptges) (Mus musculus (Mouse)).